The following is a 1119-amino-acid chain: Multiple epidermal growth factor-like domains protein 10 (1119 aa).

An N-terminal signal peptide occupies residues 1-22 (MMSSCGPLLLAVSCCLVALTSS). Over 23–851 (LNLDDPNVCS…ALPMDSYQIG (829 aa)) the chain is Extracellular. The EMI domain maps to 27–104 (DPNVCSHWES…FYESGDICVP (78 aa)). Intrachain disulfides connect C31/C92, C57/C66, C91/C102, C102/C115, C106/C121, C123/C132, C145/C157, C151/C164, C166/C175, C188/C200, C194/C207, C209/C218, C231/C243, C237/C250, and C252/C260. EGF-like domains lie at 98 to 133 (SGDI…ADCS), 141 to 176 (WGPH…WRCE), 184 to 219 (YGNN…AFCE), and 227 to 261 (HGQQ…MVCG). An N-linked (GlcNAc...) asparagine glycan is attached at N197. N272 carries an N-linked (GlcNAc...) asparagine glycan. EGF-like domains follow at residues 274 to 304 (SQEC…ERCQ) and 312 to 347 (YGIG…ESCE). 6 disulfides stabilise this stretch: C277–C285, C279–C292, C294–C303, C316–C328, C322–C335, and C337–C346. N-linked (GlcNAc...) asparagine glycosylation is found at N369 and N393. 9 consecutive EGF-like domains span residues 401 to 436 (YGEA…SDCA), 444 to 479 (YGIN…VDCS), 487 to 522 (WGLG…DRCD), 573 to 608 (WGPN…TTCQ), 616 to 653 (FGHR…ALCN), 666 to 696 (GGSC…SDCS), 709 to 739 (IHTC…LYCT), 747 to 782 (YGKD…RHCE), and 795 to 825 (RQVC…TRCD). Cystine bridges form between C405/C417, C411/C424, and C426/C435. Residue N447 is glycosylated (N-linked (GlcNAc...) asparagine). 6 disulfides stabilise this stretch: C448-C460, C454-C467, C469-C478, C491-C503, C497-C510, and C512-C521. Residue N492 is glycosylated (N-linked (GlcNAc...) asparagine). N-linked (GlcNAc...) asparagine glycosylation is present at N576. 18 cysteine pairs are disulfide-bonded: C577-C589, C583-C596, C598-C607, C620-C634, C624-C641, C643-C652, C669-C677, C671-C684, C686-C695, C712-C720, C714-C727, C729-C738, C751-C763, C757-C770, C772-C781, C798-C806, C800-C813, and C815-C824. N674 is a glycosylation site (N-linked (GlcNAc...) asparagine). N803 carries N-linked (GlcNAc...) asparagine glycosylation. The helical transmembrane segment at 852-872 (AITGIIILVLLVLILLLLFII) threads the bilayer. The Cytoplasmic portion of the chain corresponds to 873-1119 (YRKKQKGKES…SSPSPTEDSK (247 aa)).

This sequence belongs to the MEGF family.

Its subcellular location is the cell membrane. In terms of biological role, membrane receptor involved in phagocytosis by macrophages and astrocytes of apoptotic cells. Essential factor in the regulation of muscle development including myogenesis. Likely plays a key role in muscle cell proliferation, adhesion and motility. May control the balance between skeletal muscle satellite cells proliferation and differentiation through regulation of the notch signaling pathway. In Danio rerio (Zebrafish), this protein is Multiple epidermal growth factor-like domains protein 10.